A 290-amino-acid chain; its full sequence is Acetylglutamate kinase (290 aa).

Substrate is bound by residues 64–65 (GG), Arg86, and Asn183.

The protein belongs to the acetylglutamate kinase family. ArgB subfamily.

The protein resides in the cytoplasm. It catalyses the reaction N-acetyl-L-glutamate + ATP = N-acetyl-L-glutamyl 5-phosphate + ADP. It functions in the pathway amino-acid biosynthesis; L-arginine biosynthesis; N(2)-acetyl-L-ornithine from L-glutamate: step 2/4. In terms of biological role, catalyzes the ATP-dependent phosphorylation of N-acetyl-L-glutamate. This Halothermothrix orenii (strain H 168 / OCM 544 / DSM 9562) protein is Acetylglutamate kinase.